Reading from the N-terminus, the 304-residue chain is Porphobilinogen deaminase (304 aa).

S-(dipyrrolylmethanemethyl)cysteine is present on C239.

Belongs to the HMBS family. In terms of assembly, monomer. Dipyrromethane serves as cofactor.

It catalyses the reaction 4 porphobilinogen + H2O = hydroxymethylbilane + 4 NH4(+). The protein operates within porphyrin-containing compound metabolism; protoporphyrin-IX biosynthesis; coproporphyrinogen-III from 5-aminolevulinate: step 2/4. Its function is as follows. Tetrapolymerization of the monopyrrole PBG into the hydroxymethylbilane pre-uroporphyrinogen in several discrete steps. The protein is Porphobilinogen deaminase of Brucella ovis (strain ATCC 25840 / 63/290 / NCTC 10512).